The following is a 1206-amino-acid chain: Pre-mRNA-splicing factor prp12 (1206 aa).

It belongs to the RSE1 family. Belongs to the 40S cdc5-associated complex (or cwf complex), a spliceosome sub-complex reminiscent of a late-stage spliceosome composed of the U2, U5 and U6 snRNAs and at least brr2, cdc5, cwf2/prp3, cwf3/syf1, cwf4/syf3, cwf5/ecm2, spp42/cwf6, cwf7/spf27, cwf8, cwf9, cwf10, cwf11, cwf12, prp45/cwf13, cwf14, cwf15, cwf16, cwf17, cwf18, cwf19, cwf20, cwf21, cwf22, cwf23, cwf24, cwf25, cwf26, cyp7/cwf27, cwf28, cwf29/ist3, lea1, msl1, prp5/cwf1, prp10, prp12/sap130, prp17, prp22, sap61, sap62, sap114, sap145, slu7, smb1, smd1, smd3, smf1, smg1 and syf2.

It localises to the nucleus. Functionally, involved in mRNA splicing and G2/M transition. The sequence is that of Pre-mRNA-splicing factor prp12 (prp12) from Schizosaccharomyces pombe (strain 972 / ATCC 24843) (Fission yeast).